Consider the following 298-residue polypeptide: UDP-3-O-acyl-N-acetylglucosamine deacetylase (298 aa).

The Zn(2+) site is built by H80, H239, and D243. H266 (proton donor) is an active-site residue.

This sequence belongs to the LpxC family. Zn(2+) is required as a cofactor.

It carries out the reaction a UDP-3-O-[(3R)-3-hydroxyacyl]-N-acetyl-alpha-D-glucosamine + H2O = a UDP-3-O-[(3R)-3-hydroxyacyl]-alpha-D-glucosamine + acetate. Its pathway is glycolipid biosynthesis; lipid IV(A) biosynthesis; lipid IV(A) from (3R)-3-hydroxytetradecanoyl-[acyl-carrier-protein] and UDP-N-acetyl-alpha-D-glucosamine: step 2/6. In terms of biological role, catalyzes the hydrolysis of UDP-3-O-myristoyl-N-acetylglucosamine to form UDP-3-O-myristoylglucosamine and acetate, the committed step in lipid A biosynthesis. The chain is UDP-3-O-acyl-N-acetylglucosamine deacetylase from Blochmanniella floridana.